We begin with the raw amino-acid sequence, 617 residues long: LEAF RUST 10 DISEASE-RESISTANCE LOCUS RECEPTOR-LIKE PROTEIN KINASE-like 2.4 (617 aa).

An N-terminal signal peptide occupies residues 1 to 26; the sequence is MYYLPSSCLVLFLFFSLFYHLPCASS. Over 27-243 the chain is Extracellular; the sequence is KQTLGWCESQ…LPTRLSSEAK (217 aa). Asn-41, Asn-69, Asn-86, Asn-112, and Asn-184 each carry an N-linked (GlcNAc...) asparagine glycan. A helical transmembrane segment spans residues 244 to 264; it reads IATIAGVSLLPFLVLTLVVHI. Residues 265-617 lie on the Cytoplasmic side of the membrane; that stretch reads IRKQKTSNDK…SEENSISSEI (353 aa). The Protein kinase domain maps to 307-594; the sequence is NSFAEVVGRG…ALEVPPRPVL (288 aa). Residues 313 to 321 and Lys-335 each bind ATP; that span reads VGRGGFGIV. Tyr-380 carries the post-translational modification Phosphotyrosine. Asp-431 acts as the Proton acceptor in catalysis. Residues Thr-468 and Thr-471 each carry the phosphothreonine modification.

Belongs to the protein kinase superfamily. Ser/Thr protein kinase family.

The protein localises to the membrane. The catalysed reaction is L-seryl-[protein] + ATP = O-phospho-L-seryl-[protein] + ADP + H(+). It carries out the reaction L-threonyl-[protein] + ATP = O-phospho-L-threonyl-[protein] + ADP + H(+). This is LEAF RUST 10 DISEASE-RESISTANCE LOCUS RECEPTOR-LIKE PROTEIN KINASE-like 2.4 from Arabidopsis thaliana (Mouse-ear cress).